We begin with the raw amino-acid sequence, 641 residues long: Tetracycline resistance protein TetQ (641 aa).

Positions M1–A244 constitute a tr-type G domain. Residues A10–T17, D74–H78, and N128–D131 each bind GTP.

The protein belongs to the TRAFAC class translation factor GTPase superfamily. Classic translation factor GTPase family. TetM/TetO subfamily.

Its function is as follows. Abolishes the inhibitory effect of tetracyclin on protein synthesis by a non-covalent modification of the ribosomes. The sequence is that of Tetracycline resistance protein TetQ (tetQ) from Bacteroides thetaiotaomicron.